We begin with the raw amino-acid sequence, 557 residues long: Putative inactive polypeptide N-acetylgalactosaminyltransferase 11 (557 aa).

The Cytoplasmic segment spans residues 1–4 (MKSL). The helical; Signal-anchor for type II membrane protein transmembrane segment at 5 to 27 (LFGTPCSCAIFILVYCIITLFIW) threads the bilayer. The Lumenal segment spans residues 28 to 557 (FLYTDNLSNA…MRDICLSVNH (530 aa)). N-linked (GlcNAc...) asparagine glycosylation is found at N33 and N103. 5 disulfide bridges follow: C99-C325, C316-C397, C437-C450, C472-C486, and C511-C526. The interval 109-215 (TVTVSIVIAI…RGWLPPLLEP (107 aa)) is catalytic subdomain A. An N-linked (GlcNAc...) asparagine glycan is attached at N220. Residues 271–333 (PYPSSQLEGR…PCSRVGIIYK (63 aa)) form a catalytic subdomain B region. An N-linked (GlcNAc...) asparagine glycan is attached at N379. In terms of domain architecture, Ricin B-type lectin spans 456 to 557 (EDWTLTSRCQ…MRDICLSVNH (102 aa)).

Belongs to the glycosyltransferase 2 family. GalNAc-T subfamily.

The protein localises to the golgi apparatus membrane. In terms of biological role, probable inactive glycosyltransferase. The sequence is that of Putative inactive polypeptide N-acetylgalactosaminyltransferase 11 from Drosophila melanogaster (Fruit fly).